A 216-amino-acid chain; its full sequence is FMN-dependent NADH:quinone oxidoreductase 3 (216 aa).

FMN contacts are provided by residues Ser-10 and 16–18 (SAS).

Belongs to the azoreductase type 1 family. In terms of assembly, homodimer. FMN is required as a cofactor.

The enzyme catalyses 2 a quinone + NADH + H(+) = 2 a 1,4-benzosemiquinone + NAD(+). It catalyses the reaction N,N-dimethyl-1,4-phenylenediamine + anthranilate + 2 NAD(+) = 2-(4-dimethylaminophenyl)diazenylbenzoate + 2 NADH + 2 H(+). Its function is as follows. Quinone reductase that provides resistance to thiol-specific stress caused by electrophilic quinones. Functionally, also exhibits azoreductase activity. Catalyzes the reductive cleavage of the azo bond in aromatic azo compounds to the corresponding amines. The protein is FMN-dependent NADH:quinone oxidoreductase 3 of Pseudomonas fluorescens (strain ATCC BAA-477 / NRRL B-23932 / Pf-5).